Reading from the N-terminus, the 225-residue chain is Pre-mRNA-splicing factor SPF27 (225 aa).

The stretch at Ser138–Arg222 forms a coiled coil.

Belongs to the SPF27 family. Component of the pre-catalytic and catalytic spliceosome complexes. Component of the postcatalytic spliceosome P complex.

It is found in the nucleus. Required for pre-mRNA splicing as component of the activated spliceosome. May have a scaffolding role in the spliceosome assembly as it contacts all other components of the core complex. The protein is Pre-mRNA-splicing factor SPF27 (bcas2) of Danio rerio (Zebrafish).